Consider the following 302-residue polypeptide: Small ribosomal subunit biogenesis GTPase RsgA (302 aa).

A CP-type G domain is found at 69 to 229; it reads KNLLIRPKVA…VGDTPGFSKV (161 aa). Residues 118–121 and 172–180 each bind GTP; these read NKID and GPSGVGKSS. Zn(2+) contacts are provided by C252, C257, H259, and C265.

Belongs to the TRAFAC class YlqF/YawG GTPase family. RsgA subfamily. As to quaternary structure, monomer. Associates with 30S ribosomal subunit, binds 16S rRNA. The cofactor is Zn(2+).

Its subcellular location is the cytoplasm. In terms of biological role, one of several proteins that assist in the late maturation steps of the functional core of the 30S ribosomal subunit. Helps release RbfA from mature subunits. May play a role in the assembly of ribosomal proteins into the subunit. Circularly permuted GTPase that catalyzes slow GTP hydrolysis, GTPase activity is stimulated by the 30S ribosomal subunit. The polypeptide is Small ribosomal subunit biogenesis GTPase RsgA (Aquifex aeolicus (strain VF5)).